Consider the following 137-residue polypeptide: VHRRRIAPRRCSEAKCRRRFGFMFQRSAKSRWFDVVLTFVPSGFVMGHVAIISVTTDVLGPRHVKRKSERQHQRVHHELPHDKPRQSQRVMHPHAFGMRAVSQFLVTHPLGEPEAHGAFAPETPVGTRSPLRSYAIL.

Residues 67–87 (KSERQHQRVHHELPHDKPRQS) form a disordered region. The segment covering 70–85 (RQHQRVHHELPHDKPR) has biased composition (basic and acidic residues).

This is an uncharacterized protein from Human cytomegalovirus (strain AD169) (HHV-5).